A 702-amino-acid polypeptide reads, in one-letter code: Elongation factor G (702 aa).

The tr-type G domain occupies 8–290 (HRVRNIGIAA…AVAMYLPAPT (283 aa)). GTP-binding positions include 17-24 (AHIDAGKT), 87-91 (DTPGH), and 141-144 (NKMD).

The protein belongs to the TRAFAC class translation factor GTPase superfamily. Classic translation factor GTPase family. EF-G/EF-2 subfamily.

The protein localises to the cytoplasm. In terms of biological role, catalyzes the GTP-dependent ribosomal translocation step during translation elongation. During this step, the ribosome changes from the pre-translocational (PRE) to the post-translocational (POST) state as the newly formed A-site-bound peptidyl-tRNA and P-site-bound deacylated tRNA move to the P and E sites, respectively. Catalyzes the coordinated movement of the two tRNA molecules, the mRNA and conformational changes in the ribosome. The chain is Elongation factor G from Aliarcobacter butzleri (strain RM4018) (Arcobacter butzleri).